The sequence spans 62 residues: U10-buthitoxin-Hj1a (62 aa).

An N-terminal signal peptide occupies residues 1–22 (MQKIFIILVLFCILKFNVDVEG). 3 cysteine pairs are disulfide-bonded: cysteine 28-cysteine 46, cysteine 33-cysteine 59, and cysteine 37-cysteine 61.

The protein belongs to the short scorpion toxin superfamily. Potassium channel inhibitor family. Alpha-KTx 23 subfamily. As to expression, expressed by the venom gland.

Its subcellular location is the secreted. May block potassium channels. The chain is U10-buthitoxin-Hj1a from Hottentotta judaicus (Black scorpion).